Reading from the N-terminus, the 119-residue chain is Holo-[acyl-carrier-protein] synthase (119 aa).

Mg(2+) contacts are provided by aspartate 8 and glutamate 58.

The protein belongs to the P-Pant transferase superfamily. AcpS family. Mg(2+) serves as cofactor.

The protein localises to the cytoplasm. It catalyses the reaction apo-[ACP] + CoA = holo-[ACP] + adenosine 3',5'-bisphosphate + H(+). Functionally, transfers the 4'-phosphopantetheine moiety from coenzyme A to a Ser of acyl-carrier-protein. This is Holo-[acyl-carrier-protein] synthase from Bacillus cereus (strain ATCC 10987 / NRS 248).